The sequence spans 124 residues: MPTTQQLIRKGRKTEEETSDAPALEGSPQRRGVCTRVYTTTPKKPNSALRKVARVRLTNGNEVTAYIPGEGHNLQEHSIVLVRGGRVKDLPGVKYHIVRGALDTAGVEERRQGRSKYGTKKPRE.

Residues 1–42 form a disordered region; that stretch reads MPTTQQLIRKGRKTEEETSDAPALEGSPQRRGVCTRVYTTTP. D89 carries the 3-methylthioaspartic acid modification. The tract at residues 105-124 is disordered; that stretch reads AGVEERRQGRSKYGTKKPRE. A compositionally biased stretch (basic residues) spans 113–124; that stretch reads GRSKYGTKKPRE.

The protein belongs to the universal ribosomal protein uS12 family. Part of the 30S ribosomal subunit. Contacts proteins S8 and S17. May interact with IF1 in the 30S initiation complex.

Its function is as follows. With S4 and S5 plays an important role in translational accuracy. Interacts with and stabilizes bases of the 16S rRNA that are involved in tRNA selection in the A site and with the mRNA backbone. Located at the interface of the 30S and 50S subunits, it traverses the body of the 30S subunit contacting proteins on the other side and probably holding the rRNA structure together. The combined cluster of proteins S8, S12 and S17 appears to hold together the shoulder and platform of the 30S subunit. The polypeptide is Small ribosomal subunit protein uS12 (Salinibacter ruber (strain DSM 13855 / M31)).